Consider the following 899-residue polypeptide: Putative lipoxygenase 5 (899 aa).

3 disordered regions span residues 15-34 (AGSR…RSTA), 48-68 (APVE…SVAA), and 258-291 (VASA…SAES). Positions 68–204 (ARAVVTVRRR…VSRDRRVFFS (137 aa)) constitute a PLAT domain. The Lipoxygenase domain occupies 207 to 899 (PYLPSETPPG…CRGVPNSVTI (693 aa)). Fe cation-binding residues include His-559, His-564, His-751, Asn-755, and Ile-899.

Belongs to the lipoxygenase family. It depends on Fe cation as a cofactor.

The catalysed reaction is (9Z,12Z)-octadecadienoate + O2 = (13S)-hydroperoxy-(9Z,11E)-octadecadienoate. The enzyme catalyses (9Z,12Z,15Z)-octadecatrienoate + O2 = (13S)-hydroperoxy-(9Z,11E,15Z)-octadecatrienoate. It functions in the pathway lipid metabolism; oxylipin biosynthesis. In terms of biological role, plant lipoxygenase may be involved in a number of diverse aspects of plant physiology including growth and development, pest resistance, and senescence or responses to wounding. Catalyzes the hydroperoxidation of lipids containing a cis,cis-1,4-pentadiene structure. This is Putative lipoxygenase 5 from Oryza sativa subsp. japonica (Rice).